Reading from the N-terminus, the 471-residue chain is Histone deacetylase 6 (471 aa).

Met-1 is subject to N-acetylmethionine. Residues 20-333 (RVSYFYEPTI…WCYETAVAVG (314 aa)) are histone deacetylase. His-153 (proton donor/acceptor) is an active-site residue. 3 residues coordinate Zn(2+): Asp-188, His-190, and Asp-276. Residues 389–471 (PSVQFQHTPP…PEPDVNPPSS (83 aa)) form a disordered region. Acidic residues predominate over residues 453-463 (GEDEMDDDNPE).

Belongs to the histone deacetylase family. HD type 1 subfamily. Interacts with Coi1, which functions in an SCF complex that recruits regulators for ubiquitination. Interacts with AHL22. Interacts with AS1. Part of the AS1 repressor complex composed of AS1, LBD6/AS2 and HDA6. Binds to EBS and SHL. Interacts with MBD6. Interacts with HDA5. Interacts with FLD. Requires Zn(2+) as cofactor. In terms of tissue distribution, not detected in leaves, stems, flowers and young siliques.

It localises to the nucleus. The protein localises to the nucleolus. It carries out the reaction N(6)-acetyl-L-lysyl-[histone] + H2O = L-lysyl-[histone] + acetate. With respect to regulation, inhibited by trichostatin A. Its function is as follows. Responsible for the deacetylation of lysine residues on the N-terminal part of the core histones (H2A, H2B, H3 and H4). Might remove acetyl residues only from specific targets, such as rDNA repeats or complex transgenes. Histone deacetylation gives a tag for epigenetic repression and plays an important role in transcriptional regulation, cell cycle progression and developmental events. Histone deacetylases act via the formation of large multiprotein complexes. Required for rRNA gene silencing in nucleolar dominance. Plays a role in transgene silencing, but this effect seems to bee independent of the histone deacetylase activity. Part of the AS1 repressor complex to regulate the KNOX expression in leaf development. Binds to KNAT1, KNAT2, and KNATM chromatin. Involved in the regulation of flowering time. Forms a histone deacetylase complex with HDA5, FLD and MSI4/FVE that represses FLC gene expression to control flowering time. This Arabidopsis thaliana (Mouse-ear cress) protein is Histone deacetylase 6.